A 551-amino-acid polypeptide reads, in one-letter code: Probable terpene synthase 8 (551 aa).

Mg(2+) is bound by residues aspartate 307, aspartate 311, and glutamate 457. The DDXXD motif motif lies at 307 to 311 (DDTYD).

Belongs to the terpene synthase family. Mg(2+) serves as cofactor.

Functionally, probable sesquiterpene synthase. The sequence is that of Probable terpene synthase 8 (TPS8) from Ricinus communis (Castor bean).